A 451-amino-acid polypeptide reads, in one-letter code: Cysteine desulfurase (451 aa).

Pyridoxal 5'-phosphate is bound by residues A121, T122, Q229, S249, and H251. N6-(pyridoxal phosphate)lysine is present on K252. Residue T289 participates in pyridoxal 5'-phosphate binding. C375 (cysteine persulfide intermediate) is an active-site residue. C375 contacts [2Fe-2S] cluster. C375 is a binding site for Zn(2+). C375 carries the post-translational modification Cysteine persulfide.

The protein belongs to the class-V pyridoxal-phosphate-dependent aminotransferase family. NifS/IscS subfamily. As to quaternary structure, homodimer. Component of the mitochondrial core iron-sulfur cluster (ISC) complex composed of NFS1, LYRM4, NDUFAB1, ISCU, FXN, and FDX2; this complex is a heterohexamer containing two copies of each monomer. Component of cyteine desulfurase complex composed of NFS1, LYRM4 and NDUFAB1; this complex contributes to the activation of cysteine desulfurase activity and NFS1 stabilization. Interacts (homodimer form) with ISCU (D-state); each monomer interacts with the C-terminal regions of each NFS1 monomer. Interacts with HSPA9. Interacts (via homodimer form) with FDX2. Interacts (via homodimer form) with FXN. Interacts with LYRM4. Component of a complex composed of FXN, NFS1, LYRM4 and ISCU. Monomer. Homodimer. Oligomer. Interacts with ISCU. Component of the cysteine desulfurase complex composed of NFS1 and LYRM4; this complex contributes to the activation of cysteine desulfurase activity. Interacts with MOCS3. Pyridoxal 5'-phosphate is required as a cofactor. Post-translationally, N-gluconoylated. In terms of processing, cysteine persulfide intermediate is reduced by thiol-containing molecules like glutathione and L-cysteine. Persulfide reduction is a rate-limiting step of cysteine desulfurase catalytic cycle.

The protein resides in the mitochondrion. It localises to the cytoplasm. It is found in the nucleus. The protein localises to the cytoskeleton. Its subcellular location is the microtubule organizing center. The protein resides in the centrosome. The enzyme catalyses (sulfur carrier)-H + L-cysteine = (sulfur carrier)-SH + L-alanine. It catalyses the reaction L-cysteinyl-[cysteine desulfurase] + L-cysteine = S-sulfanyl-L-cysteinyl-[cysteine desulfurase] + L-alanine. Active only in complex with LYRM4. Its function is as follows. Cysteine desulfurase, of the core iron-sulfur cluster (ISC) assembly complex, that catalyzes the desulfuration of L-cysteine to L-alanine, as component of the cysteine desulfurase complex leading to the formation of a cysteine persulfide intermediate at the active site cysteine residue and participates in the [2Fe-2S] clusters assembly on the scaffolding protein ISCU. The persulfide is then transferred on the flexible Cys loop from the catalytic site of NFS1 to the surface of NFS1. After the NFS1-linked persulfide sulfur is transferred to one of the conserved Cys residues of the scaffold, a reaction assisted by FXN. The core iron-sulfur cluster (ISC) assembly complex is involved in the de novo synthesis of a [2Fe-2S] cluster, the first step of the mitochondrial iron-sulfur protein biogenesis. This process is initiated by the cysteine desulfurase complex (NFS1:LYRM4:NDUFAB1) that produces persulfide which is delivered on the scaffold protein ISCU in a FXN-dependent manner. Then this complex is stabilized by FDX2 which provides reducing equivalents to accomplish the [2Fe-2S] cluster assembly. Finally, the [2Fe-2S] cluster is transferred from ISCU to chaperone proteins, including HSCB, HSPA9 and GLRX5. In terms of biological role, may catalyze the desulfuration of L-cysteine to L-alanine as component of the cysteine desulfurase complex (NFS1:LYRM4), leading to the formation of a cysteine persulfide intermediate. Acts as a sulfur donor for MOCS3 by transferring the sulfur of the cysteine persulfide intermediate on MOCS3. This chain is Cysteine desulfurase, found in Rattus norvegicus (Rat).